A 232-amino-acid chain; its full sequence is Orotate phosphoribosyltransferase (232 aa).

Residues Arg107, Lys108, Lys111, and 133–141 (EDLTTDGGS) each bind 5-phospho-alpha-D-ribose 1-diphosphate. Residue Thr137 coordinates orotate.

It belongs to the purine/pyrimidine phosphoribosyltransferase family. PyrE subfamily. In terms of assembly, homodimer. Requires Mg(2+) as cofactor.

It catalyses the reaction orotidine 5'-phosphate + diphosphate = orotate + 5-phospho-alpha-D-ribose 1-diphosphate. It functions in the pathway pyrimidine metabolism; UMP biosynthesis via de novo pathway; UMP from orotate: step 1/2. Catalyzes the transfer of a ribosyl phosphate group from 5-phosphoribose 1-diphosphate to orotate, leading to the formation of orotidine monophosphate (OMP). This chain is Orotate phosphoribosyltransferase, found in Cereibacter sphaeroides (strain ATCC 17029 / ATH 2.4.9) (Rhodobacter sphaeroides).